The chain runs to 677 residues: MAQVHLTIFIFSSIFVISSSSFIPPPHPFDPLTETELKLVRNIINKSYPIGHNHKFTFQYVGLNEPEKSLVLSWHSSPDRNVKPPPRQAFVIARDKGMSREIVIDFSTRAIVSNKIHVGNGNPMLTIDEQQAATAVVQKYKPFCDSIIKRGLNLSEVVVTSSTMGWFGETKTKRFIRTIPFYLNGSVNTYLRPIEGMTIIVNLDQMKVTGFKDRFTGPMPKANGREYRISKLKPPFGPSLRSAVVFQPDGPGFKIDGHVVRWANWEFHMSFDVRAGLVISLASIFDMDMNRYRQVLYKGHLSEMFVPYMDPNDDWYFISYLDCGEFGCGQTAVSLEPYTDCPPNAAFMDGIFPGQDGTPTKISNVMCIFEKYAGDIMWRHTEAEVPGLKITEVRPDVSLVARMVTTVGNYDYIIEYEFKPSGSIKMGVGLTGVLEVKPVEYVHTSEIKEDDIYGTIVADNTVGVNHDHFVTFRLDLDIDGTENSFVRTELVTKRTPKSVNTPRKSYWTTKRNTAKTEADARVKLGLRAEELVVVNPTKKTKHGNEVGYRLLPGPASSPLLVQDDYPQIRAAFTNYNVWITPYNKSEVWASGLYADRSQGDDTLAVWSQRDREIENKDIVMWYTVGFHHVPCQEDFPTMPTMFGGFELRPTNFFEQNPVLKAKPFNLTTIPKCTTKNE.

Residue 320–331 coordinates substrate; that stretch reads YLDCGEFGCGQT. The Proton acceptor role is filled by Asp-322. A disulfide bond links Cys-341 and Cys-367. 407–412 provides a ligand contact to substrate; it reads VGNYDY. The active-site Schiff-base intermediate with substrate; via topaquinone is the Tyr-410. The residue at position 410 (Tyr-410) is a 2',4',5'-topaquinone. Cu cation-binding residues include His-466 and His-468. Residues Asp-477, Asp-617, and Ile-618 each coordinate Mn(2+). His-628 lines the Cu cation pocket.

The protein belongs to the copper/topaquinone oxidase family. As to quaternary structure, homodimer. Cu cation is required as a cofactor. It depends on Zn(2+) as a cofactor. L-topaquinone serves as cofactor. In terms of processing, topaquinone (TPQ) is generated by copper-dependent autoxidation of a specific tyrosyl residue. In terms of tissue distribution, expressed exclusively in leaves.

The protein resides in the peroxisome. The catalysed reaction is a primary methyl amine + O2 + H2O = an aldehyde + H2O2 + NH4(+). It participates in amine and polyamine degradation; putrescine degradation. Its function is as follows. Copper amine oxidase that can use putrescine and spermidine as substrates. Involved in putrescine catabolism in peroxisomes in response to salt stress. Regulates arginine-dependent nitric oxide (NO) production, a key signaling molecule regulating a wide range of physiological processes including responses to salt stress, by influencing arginine bioavailability. Modulates primary root growth. The polypeptide is Amine oxidase [copper-containing] alpha 2, peroxisomal (Arabidopsis thaliana (Mouse-ear cress)).